Consider the following 411-residue polypeptide: Phospholipase ABHD3 (411 aa).

The helical; Signal-anchor for type II membrane protein transmembrane segment at Val25 to Ala45 threads the bilayer. The AB hydrolase-1 domain occupies Pro140–Val247. Residues Ser220, Asp346, and His375 each act as charge relay system in the active site.

It belongs to the AB hydrolase superfamily. AB hydrolase 4 family.

The protein resides in the membrane. It carries out the reaction a 1,2-diacyl-sn-glycero-3-phosphocholine + H2O = a 1-acyl-sn-glycero-3-phosphocholine + a fatty acid + H(+). It catalyses the reaction a 1,2-diacyl-sn-glycero-3-phosphocholine + H2O = a 2-acyl-sn-glycero-3-phosphocholine + a fatty acid + H(+). The catalysed reaction is 1-tetradecanoyl-2-(9Z,12Z-octadecadienoyl)-sn-glycero-3-phosphocholine + H2O = 2-(9Z,12Z-octadecadienoyl)-sn-glycero-3-phosphocholine + tetradecanoate + H(+). The enzyme catalyses 1-tetradecanoyl-2-(9Z,12Z-octadecadienoyl)-sn-glycero-3-phosphocholine + H2O = 1-tetradecanoyl-sn-glycero-3-phosphocholine + (9Z,12Z)-octadecadienoate + H(+). It carries out the reaction 1-tetradecanoyl-2-(5Z,8Z,11Z,14Z-eicosatetraenoyl)-sn-glycero-3-phosphocholine + H2O = 2-(5Z,8Z,11Z,14Z)-eicosatetraenoyl-sn-glycero-3-phosphocholine + tetradecanoate + H(+). It catalyses the reaction 1-tetradecanoyl-2-(4Z,7Z,10Z,13Z,16Z,19Z-docosahexaenoyl)-sn-glycero-3-phosphocholine + H2O = 2-(4Z,7Z,10Z,13Z,16Z,19Z-docosahexaenoyl)-sn-glycero-3-phosphocholine + tetradecanoate + H(+). The catalysed reaction is 1,2-ditetradecanoyl-sn-glycero-3-phosphocholine + H2O = 2-tetradecanoyl-sn-glycero-3-phosphocholine + tetradecanoate + H(+). The enzyme catalyses 1-octadecanoyl-2-acetyl-sn-glycero-3-phosphocholine + H2O = 1-octadecanoyl-sn-glycero-3-phosphocholine + acetate + H(+). It carries out the reaction 1,2-ditetradecanoyl-sn-glycero-3-phosphocholine + H2O = 1-tetradecanoyl-sn-glycero-3-phosphocholine + tetradecanoate + H(+). It catalyses the reaction 1-octadecanoyl-2-pentanoyl-sn-glycero-3-phosphocholine + H2O = pentanoate + 1-octadecanoyl-sn-glycero-3-phosphocholine + H(+). The catalysed reaction is 1-octadecanoyl-2-hexanoyl-sn-glycero-3-phosphocholine + H2O = hexanoate + 1-octadecanoyl-sn-glycero-3-phosphocholine + H(+). The enzyme catalyses 1-octadecanoyl-2-octanoyl-sn-glycero-3-phosphocholine + H2O = 1-octadecanoyl-sn-glycero-3-phosphocholine + octanoate + H(+). It carries out the reaction 1-octadecanoyl-2-nonanoyl-sn-glycero-3-phosphocholine + H2O = nonanoate + 1-octadecanoyl-sn-glycero-3-phosphocholine + H(+). It catalyses the reaction 1-O-hexadecyl-2-nonadioyl-sn-glycero-3-phosphocholine + H2O = nonanedioate + 1-O-hexadecyl-sn-glycero-3-phosphocholine + H(+). The catalysed reaction is 1-hexadecanoyl-2-nonadioyl-sn-glycero-3-phosphocholine + H2O = nonanedioate + 1-hexadecanoyl-sn-glycero-3-phosphocholine + H(+). The enzyme catalyses 1-hexadecanoyl-2-(9-oxononanoyl)-sn-glycero-3-phosphocholine + H2O = 9-oxononanoate + 1-hexadecanoyl-sn-glycero-3-phosphocholine + H(+). It carries out the reaction 1-hexadecanoyl-2-(5-oxopentanoyl)-sn-glycero-3-phosphocholine + H2O = 5-oxopentanoate + 1-hexadecanoyl-sn-glycero-3-phosphocholine + H(+). It catalyses the reaction 1-hexadecanoyl-2-glutaroyl-sn-glycero-3-phosphocholine + H2O = glutarate + 1-hexadecanoyl-sn-glycero-3-phosphocholine + H(+). The catalysed reaction is 1-O-hexadecyl-2-acetyl-sn-glycero-3-phosphocholine + H2O = 1-O-hexadecyl-sn-glycero-3-phosphocholine + acetate + H(+). Phospholipase that may play a role in phospholipids remodeling. May selectively cleave myristate (C14)-containing phosphatidylcholines through its predominant phospholipase 1 activity, cleaving preferentially acyl groups in sn1 position. In parallel, may have a minor phospholipase 2 activity acting on acyl groups in position sn2. In addition to (C14)-containing phosphatidylcholines, may also act on other medium-chain-containing and oxidatively truncated phospholipids. This is Phospholipase ABHD3 from Bos taurus (Bovine).